The primary structure comprises 125 residues: Multifunctional methyltransferase subunit TRM112-like protein (125 aa).

Positions 2-119 (KLLTHNLLSS…SRGIPNMLLN (118 aa)) constitute a TRM112 domain.

Belongs to the TRM112 family. Part of the heterodimeric BUD23-TRM112 methyltransferase complex; this heterodimerization is necessary for the metabolic stability and activity of the catalytic subunit BUD23. Part of the heterodimeric N6AMT1-TRM112 methyltransferase complex; this heterodimerization is necessary for S-adenosyl-L-methionine-binding to N6AMT1/HEMK2. Part of the heterodimeric ALKBH8-TRM112 methyltransferase complex. Part of the heterodimeric METTL5-TRM112 methyltransferase complex; this heterodimerization is necessary for the stability of the catalytic subunit METTL5. Part of the heterodimeric THUMPD3-TRM112 methyltransferase complex; this complex forms an active tRNA methyltransferase, where TRMT112 acts as an activator of the catalytic subunit THUMPD3. Part of the heterodimeric THUMPD2-TRM112 methyltransferase complex; this complex forms an active tRNA methyltransferase, where TRMT112 acts as an activator of the catalytic subunit THUMPD2. Part of the heterodimeric TRMT11-TRM112 methyltransferase complex; this complex forms an active tRNA methyltransferase, where TRMT112 acts as an activator of the catalytic subunit TRMT11. In terms of tissue distribution, abundantly expressed in the testis, also expressed in the brain, heart, kidney, liver, lung, muscle and spleen.

It is found in the nucleus. Its subcellular location is the nucleoplasm. The protein localises to the cytoplasm. It localises to the perinuclear region. In terms of biological role, acts as an activator of both rRNA/tRNA and protein methyltransferases. Together with methyltransferase BUD23, methylates the N(7) position of a guanine in 18S rRNA. The heterodimer with HEMK2/N6AMT1 catalyzes N5-methylation of ETF1 on 'Gln-185', using S-adenosyl L-methionine as methyl donor. The heterodimer with ALKBH8 catalyzes the methylation of 5-carboxymethyl uridine to 5-methylcarboxymethyl uridine at the wobble position of the anticodon loop in target tRNA species. Together with methyltransferase THUMPD3, catalyzes the formation of N(2)-methylguanosine at position 6 in a broad range of tRNA substrates and at position 7 of tRNA(Trp). Involved in the pre-rRNA processing steps leading to small-subunit rRNA production. Together with methyltransferase METTL5, specifically methylates the 6th position of adenine in position 1832 of 18S rRNA. The polypeptide is Multifunctional methyltransferase subunit TRM112-like protein (Trmt112) (Mus musculus (Mouse)).